A 276-amino-acid chain; its full sequence is MGIIVYKPTSPGRRNASVLNYKEIITKTEPEKSLVFTEKKWAGRNNQGRITVRHRGGGHKKKIRIVDFKRDKDGIPAKVEAIEYDPNRTAFLALLCYADGERRYILAPEGLKVGDTVMSGPDADIKVGNALPLKYIPVGTMIHNIELYPGRGGQLVKSAGAVAQLMAKEGKYALIRLPSGELRYVSQECRATIGQVGNLDHENVRIGKAGRKRWMGIRPTVRGSAMNPVDHPHGGGEGKAPIGHPGPLTPWGKPTLGYKTRKKNKPSDKFIVKRRK.

The disordered stretch occupies residues 223-276 (GSAMNPVDHPHGGGEGKAPIGHPGPLTPWGKPTLGYKTRKKNKPSDKFIVKRRK). The span at 265 to 276 (KPSDKFIVKRRK) shows a compositional bias: basic and acidic residues.

The protein belongs to the universal ribosomal protein uL2 family. Part of the 50S ribosomal subunit. Forms a bridge to the 30S subunit in the 70S ribosome.

Its function is as follows. One of the primary rRNA binding proteins. Required for association of the 30S and 50S subunits to form the 70S ribosome, for tRNA binding and peptide bond formation. It has been suggested to have peptidyltransferase activity; this is somewhat controversial. Makes several contacts with the 16S rRNA in the 70S ribosome. The sequence is that of Large ribosomal subunit protein uL2 from Caldicellulosiruptor saccharolyticus (strain ATCC 43494 / DSM 8903 / Tp8T 6331).